We begin with the raw amino-acid sequence, 342 residues long: Cathepsin B-like cysteine proteinase 1 (342 aa).

The first 18 residues, 1-18, serve as a signal peptide directing secretion; that stretch reads MKYLVLALCTYLCSQTGA. Positions 19 to 86 are cleaved as a propeptide — activation peptide; the sequence is DENAAQGIPL…VKEDPDPEVD (68 aa). N-linked (GlcNAc...) asparagine glycosylation occurs at N99. 6 cysteine pairs are disulfide-bonded: C100–C128, C111–C156, C147–C214, C148–C152, C185–C218, and C193–C205. Residue C114 is part of the active site. N138 carries an N-linked (GlcNAc...) asparagine glycan. N-linked (GlcNAc...) asparagine glycosylation is present at N198. Residue H285 is part of the active site. A glycan (N-linked (GlcNAc...) asparagine) is linked at N296. Residue N305 is part of the active site.

It belongs to the peptidase C1 family.

Its function is as follows. Expression of the protease correlates with blood-feeding and suggests a role for the protease in blood digestion. This is Cathepsin B-like cysteine proteinase 1 (AC-1) from Haemonchus contortus (Barber pole worm).